The chain runs to 262 residues: Global transcriptional regulator CodY (262 aa).

Residues 1–159 (MAHLLEKTRK…ASTVVGIQLL (159 aa)) are GAF domain. The H-T-H motif DNA-binding region spans 207–226 (ASVIADRIGITRSVIVNALR).

The protein belongs to the CodY family.

It is found in the cytoplasm. DNA-binding global transcriptional regulator which is involved in the adaptive response to starvation and acts by directly or indirectly controlling the expression of numerous genes in response to nutrient availability. During rapid exponential growth, CodY is highly active and represses genes whose products allow adaptation to nutrient depletion. This Streptococcus pneumoniae (strain ATCC BAA-255 / R6) protein is Global transcriptional regulator CodY.